The chain runs to 292 residues: Arabinose operon regulatory protein (292 aa).

Pro-8, Thr-24, Arg-38, Tyr-82, and His-93 together coordinate alpha-L-arabinopyanose. The HTH araC/xylS-type domain maps to 180–279 (REACQYISDH…GASPSEFRAG (100 aa)). 2 consecutive DNA-binding regions (H-T-H motif) follow at residues 198 to 219 (ASVA…RQQL) and 246 to 269 (IATV…KKCT).

In terms of assembly, homodimer.

The protein resides in the cytoplasm. Arabinose converts the repressor form of AraC to the activator form to regulate the araBAD promoter. In the absence of arabinose, AraC binds to the araO2 and araI1 half-sites in the promoter region of the araBAD operon, leading to the formation of a DNA loop that blocks access of RNA polymerase to the promoter. In the presence of arabinose and the cyclic AMP receptor protein (CRP), it binds to the adjacent half-sites araI1 and araI2, leading to the binding of RNA polymerase to the promoter region and transcription of the araBAD operon. AraI1 acts as a switch mechanism allowing both the repressor and the activator forms of AraC protein to regulate the araBAD promoter. Inhibited by D-fucose, which binds competitively to the same site on the protein. Functionally, transcription factor that regulates the expression of several genes involved in the transport and metabolism of L-arabinose. Functions both as a positive and a negative regulator. In the presence of arabinose, activates the expression of the araBAD, araE, araFGH and araJ promoters. In the absence of arabinose, negatively regulates the araBAD operon. Represses its own transcription. Acts by binding directly to DNA. This chain is Arabinose operon regulatory protein, found in Escherichia coli (strain K12).